The following is a 155-amino-acid chain: Snaclec clone 2100755 (155 aa).

Residues Met-1–Ala-23 form the signal peptide. 3 cysteine pairs are disulfide-bonded: Cys-25/Cys-36, Cys-53/Cys-144, and Cys-119/Cys-136. The C-type lectin domain occupies Tyr-32 to Lys-145.

The protein belongs to the snaclec family. As to quaternary structure, heterodimer; disulfide-linked.

It is found in the secreted. Functionally, interferes with one step of hemostasis (modulation of platelet aggregation, or coagulation cascade, for example). The protein is Snaclec clone 2100755 of Deinagkistrodon acutus (Hundred-pace snake).